The primary structure comprises 298 residues: Beta-soluble NSF attachment protein (298 aa).

This sequence belongs to the SNAP family. As to quaternary structure, interacts with PRKCABP, and disrupts the interaction between GRIA2 and PRKCABP, leading to the internalization of GRIA2.

Its subcellular location is the membrane. In terms of biological role, required for vesicular transport between the endoplasmic reticulum and the Golgi apparatus. The sequence is that of Beta-soluble NSF attachment protein (NAPB) from Homo sapiens (Human).